Consider the following 516-residue polypeptide: Na(+)/H(+) antiporter NhaB (516 aa).

12 consecutive transmembrane segments (helical) span residues 23–43 (LALI…PFVA), 61–80 (CYPL…IGMT), 97–117 (LLLM…LFVF), 120–140 (LLLG…AAAF), 144–164 (FLDA…FYGI), 202–222 (LMMH…VGEP), 238–258 (FFLR…LTCL), 303–323 (ALIG…VGLI), 348–368 (TEAL…AVII), 391–411 (LFYL…VGTV), 447–467 (ATPN…APLI), and 475–495 (VWMA…CVEF).

This sequence belongs to the NhaB Na(+)/H(+) (TC 2.A.34) antiporter family.

The protein resides in the cell inner membrane. The enzyme catalyses 2 Na(+)(in) + 3 H(+)(out) = 2 Na(+)(out) + 3 H(+)(in). Functionally, na(+)/H(+) antiporter that extrudes sodium in exchange for external protons. This is Na(+)/H(+) antiporter NhaB from Klebsiella pneumoniae subsp. pneumoniae (strain ATCC 700721 / MGH 78578).